The primary structure comprises 254 residues: H-2 class II histocompatibility antigen, I-E alpha chain (254 aa).

The signal sequence occupies residues 1–24 (RSRALILGVLALTTMLSLCGGEDD). The interval 25–109 (IEADHVAFYG…KDSNFTPAAN (85 aa)) is alpha-1. The Extracellular segment spans residues 25–216 (IEADHVAFYG…IPAPMSELTE (192 aa)). N103 and N143 each carry an N-linked (GlcNAc...) asparagine glycan. Positions 110–203 (EAPQATVFPK…GLEEPVLKHW (94 aa)) are alpha-2. One can recognise an Ig-like C1-type domain in the interval 112–204 (PQATVFPKSP…LEEPVLKHWE (93 aa)). A disulfide bridge connects residues C132 and C188. The segment at 204–216 (EPEIPAPMSELTE) is connecting peptide. Residues 217 to 242 (TVVCALGLSVGLVGIVVGTIFIIQGL) form a helical membrane-spanning segment. Over 243 to 254 (RSGGTSRHPGPL) the chain is Cytoplasmic.

It belongs to the MHC class II family.

The protein resides in the membrane. The protein is H-2 class II histocompatibility antigen, I-E alpha chain of Mus musculus (Mouse).